Here is a 351-residue protein sequence, read N- to C-terminus: Uroporphyrinogen decarboxylase (351 aa).

Substrate-binding positions include 25-29 (RQAGR), aspartate 74, tyrosine 151, serine 206, and histidine 325.

This sequence belongs to the uroporphyrinogen decarboxylase family. As to quaternary structure, homodimer.

It is found in the cytoplasm. It carries out the reaction uroporphyrinogen III + 4 H(+) = coproporphyrinogen III + 4 CO2. It functions in the pathway porphyrin-containing compound metabolism; protoporphyrin-IX biosynthesis; coproporphyrinogen-III from 5-aminolevulinate: step 4/4. Its function is as follows. Catalyzes the decarboxylation of four acetate groups of uroporphyrinogen-III to yield coproporphyrinogen-III. The polypeptide is Uroporphyrinogen decarboxylase (Chlorobaculum parvum (strain DSM 263 / NCIMB 8327) (Chlorobium vibrioforme subsp. thiosulfatophilum)).